The following is a 794-amino-acid chain: Histone-lysine N-methyltransferase, H3 lysine-9 specific SUVH5 (794 aa).

2 disordered regions span residues 187-210 (VGRD…KRSI) and 254-276 (SPVK…KNSE). Polar residues predominate over residues 194 to 203 (NMGSKFSKNG). Residues 258-276 (PSEKRNGDYGEGSMRKNSE) show a composition bias toward basic and acidic residues. Residues 365-515 (GTVPGVEVGD…KLVFKFKLRR (151 aa)) form the YDG domain. Residues 585–644 (KSCGCTNGCSKSKNCACIVKNGGKIPYYDGAIVEIKPLVYECGPHCKCPPSCNMRVSQHG) form the Pre-SET domain. One can recognise an SET domain in the interval 647–764 (IKLEIFKTES…PLQELSYDYN (118 aa)). One can recognise a Post-SET domain in the interval 778-794 (KKKFCYCGSAECSGRLY).

It belongs to the class V-like SAM-binding methyltransferase superfamily. Histone-lysine methyltransferase family. Suvar3-9 subfamily. In terms of tissue distribution, expressed in leaves stems and flowers.

The protein resides in the nucleus. The protein localises to the chromosome. Its subcellular location is the centromere. It catalyses the reaction N(6)-methyl-L-lysyl(9)-[histone H3] + S-adenosyl-L-methionine = N(6),N(6)-dimethyl-L-lysyl(9)-[histone H3] + S-adenosyl-L-homocysteine + H(+). The catalysed reaction is L-lysyl(9)-[histone H3] + S-adenosyl-L-methionine = N(6)-methyl-L-lysyl(9)-[histone H3] + S-adenosyl-L-homocysteine + H(+). In terms of biological role, histone methyltransferase. Methylates 'Lys-9' of histone H3. H3 'Lys-9' methylation represents a specific tag for epigenetic transcriptional repression. The protein is Histone-lysine N-methyltransferase, H3 lysine-9 specific SUVH5 (SUVH5) of Arabidopsis thaliana (Mouse-ear cress).